The following is a 334-amino-acid chain: ADP-L-glycero-D-manno-heptose-6-epimerase (334 aa).

NADP(+) contacts are provided by residues 11–12, 32–33, K39, K54, 77–81, and N94; these read FI, DN, and QGACS. The active-site Proton acceptor is the Y141. K145 is an NADP(+) binding site. N171 serves as a coordination point for substrate. V172 and K180 together coordinate NADP(+). The Proton acceptor role is filled by K180. Substrate is bound by residues R182, H189, 203–206, R216, and Y295; that span reads FGSN.

The protein belongs to the NAD(P)-dependent epimerase/dehydratase family. HldD subfamily. Homopentamer. The cofactor is NADP(+).

It catalyses the reaction ADP-D-glycero-beta-D-manno-heptose = ADP-L-glycero-beta-D-manno-heptose. Its pathway is nucleotide-sugar biosynthesis; ADP-L-glycero-beta-D-manno-heptose biosynthesis; ADP-L-glycero-beta-D-manno-heptose from D-glycero-beta-D-manno-heptose 7-phosphate: step 4/4. It participates in bacterial outer membrane biogenesis; LOS core biosynthesis. Its function is as follows. Catalyzes the interconversion between ADP-D-glycero-beta-D-manno-heptose and ADP-L-glycero-beta-D-manno-heptose via an epimerization at carbon 6 of the heptose. The protein is ADP-L-glycero-D-manno-heptose-6-epimerase of Neisseria meningitidis serogroup B (strain ATCC BAA-335 / MC58).